The primary structure comprises 402 residues: Phosphoglycerate kinase (402 aa).

Residues 24-26 (DFN), R40, 63-66 (HFGR), R122, and R155 each bind substrate. ATP contacts are provided by residues K206, G297, E328, and 357 to 360 (GGDS).

It belongs to the phosphoglycerate kinase family. As to quaternary structure, monomer.

The protein resides in the cytoplasm. It carries out the reaction (2R)-3-phosphoglycerate + ATP = (2R)-3-phospho-glyceroyl phosphate + ADP. Its pathway is carbohydrate degradation; glycolysis; pyruvate from D-glyceraldehyde 3-phosphate: step 2/5. The protein is Phosphoglycerate kinase of Synechococcus elongatus (strain ATCC 33912 / PCC 7942 / FACHB-805) (Anacystis nidulans R2).